A 49-amino-acid polypeptide reads, in one-letter code: Large ribosomal subunit protein bL33 (49 aa).

This sequence belongs to the bacterial ribosomal protein bL33 family.

In Clostridium perfringens (strain ATCC 13124 / DSM 756 / JCM 1290 / NCIMB 6125 / NCTC 8237 / Type A), this protein is Large ribosomal subunit protein bL33.